We begin with the raw amino-acid sequence, 755 residues long: Proprotein convertase subtilisin/kexin type 4 (755 aa).

The first 25 residues, 1 to 25 (MRPAPIALWLRLVLALALVRPRAVG), serve as a signal peptide directing secretion. Positions 26-113 (WAPVRAPIYV…QQTLQRRVKR (88 aa)) are excised as a propeptide. Positions 126 to 440 (QWYMNSEAQP…YGLLDAGLLV (315 aa)) constitute a Peptidase S8 domain. Catalysis depends on charge relay system residues Asp-158, His-199, and Ser-373. The P/Homo B domain occupies 449 to 581 (TQPQRKCAVR…TLLLYGTAED (133 aa)). Asn-475 and Asn-629 each carry an N-linked (GlcNAc...) asparagine glycan. A helical membrane pass occupies residues 709–729 (AMVLSLLAVTLGGPVLCGMSM).

The protein belongs to the peptidase S8 family. Furin subfamily. As to quaternary structure, the proPCSK4 form interacts with HSPA5; the interaction takes place at the endoplasmic reticulum. N-glycosylated. Post-translationally, synthesized in the endoplasmic reticulum as a zymogen, is matured by autocatalytic cleavage between the prodomain and the catalytic domain. In terms of tissue distribution, placenta.

Its subcellular location is the membrane. The protein resides in the cytoplasmic vesicle. It localises to the secretory vesicle. It is found in the acrosome membrane. In terms of biological role, proprotein convertase involved in the processing of hormone and other protein precursors at sites comprised of pairs of basic amino acid residues. In males, important for ADAM2 processing as well as other acrosomal proteins with roles in fertilization and critical for normal fertilization events such as sperm capacitation, acrosome reaction and binding of sperm to zona pellucida. Also plays a role in female fertility, involved in the regulation of trophoblast migration and placental development, may be through the proteolytical processing and activation of proteins such as IGF2. May also participate in folliculogenesis in the ovaries. This is Proprotein convertase subtilisin/kexin type 4 from Homo sapiens (Human).